Here is a 421-residue protein sequence, read N- to C-terminus: Glycosaminoglycan xylosylkinase homolog (421 aa).

The first 21 residues, 1–21, serve as a signal peptide directing secretion; the sequence is MNKRSVIIAGIVASLLGLALG. A glycan (N-linked (GlcNAc...) asparagine) is linked at Asn-83. Residues Gln-131 and Lys-147 each coordinate ATP. Asp-166 is a binding site for Mn(2+). Intrachain disulfides connect Cys-225/Cys-240 and Cys-230/Cys-233. 252 to 255 serves as a coordination point for ATP; that stretch reads IYIV. Intrachain disulfides connect Cys-285-Cys-351 and Cys-352-Cys-409. Residue Asp-314 is part of the active site. ATP-binding residues include Glu-319 and Asp-329. Asp-329 contributes to the Mn(2+) binding site.

It belongs to the FAM20 family. Requires Mn(2+) as cofactor.

The protein resides in the golgi apparatus. The protein localises to the endoplasmic reticulum. It catalyses the reaction 3-O-(beta-D-galactosyl-(1-&gt;3)-beta-D-galactosyl-(1-&gt;4)-beta-D-xylosyl)-L-seryl-[protein] + ATP = 3-O-(beta-D-galactosyl-(1-&gt;3)-beta-D-galactosyl-(1-&gt;4)-beta-D-2-O-phosphoxylosyl)-L-seryl-[protein] + ADP + H(+). Its function is as follows. Kylose kinase that mediates the 2-O-phosphorylation of xylose in the glycosaminoglycan-protein linkage region of proteoglycans. The polypeptide is Glycosaminoglycan xylosylkinase homolog (Drosophila melanogaster (Fruit fly)).